We begin with the raw amino-acid sequence, 146 residues long: Snaclec stejaggregin-B subunit beta-1 (146 aa).

The first 23 residues, 1 to 23 (MGRFIFVSFGLLVVFLSLSGTGA), serve as a signal peptide directing secretion. Cystine bridges form between C25–C36, C53–C142, and C119–C134. Residues 32–143 (YDLYCYRVFQ…CSQTYPFVCK (112 aa)) enclose the C-type lectin domain.

The protein belongs to the snaclec family. In terms of assembly, heteromultimer; disulfide-linked. As to expression, expressed by the venom gland.

Its subcellular location is the secreted. Interferes with one step of hemostasis (modulation of platelet aggregation, or coagulation cascade, for example). The chain is Snaclec stejaggregin-B subunit beta-1 from Trimeresurus stejnegeri (Chinese green tree viper).